Reading from the N-terminus, the 746-residue chain is F-box only protein 30 (746 aa).

The segment at 49-110 (EHRLLCPFER…SYSDRKSYES (62 aa)) adopts a TRAF-type zinc-finger fold. 2 disordered regions span residues 222–241 (MDEENNKESFQDKNLKDQDH) and 247–266 (IGAVGGVDYSGTSQNAQAEQ). Residues 225–241 (ENNKESFQDKNLKDQDH) show a composition bias toward basic and acidic residues. The segment covering 256-266 (SGTSQNAQAEQ) has biased composition (polar residues). Phosphoserine is present on Ser-383. An F-box domain is found at 611–659 (SDHLSSLPFEVLQHIAGFLDGFSLCQLACVSRLMRDVCGSLLQSRGMVI).

In terms of assembly, part of a SCF (SKP1-cullin-F-box) protein ligase complex. Interacts with SKP1, CUL1 and RBX1/ROC1. In terms of processing, auto-ubiquitinated. Post-translationally, may be neddylated. Neddylation may be required for E3 ligase activity, since it was observed only after purification with o-phenanthroline.

Its pathway is protein modification; protein ubiquitination. Substrate-recognition component of the SCF (SKP1-CUL1-F-box protein)-type E3 ubiquitin ligase complex. Required for muscle atrophy following denervation. This chain is F-box only protein 30 (Fbxo30), found in Mus musculus (Mouse).